A 485-amino-acid chain; its full sequence is MFAHTALRQRCAKWLLATGLFLLLGACVEKPSTLERVKEDGVLRVITRNSPATYFQDRNGETGFEYELVQHFADDLGVKLQIETADNLDELYDALGKPSGPVLAAAGLVSSERRKTQVKYSHPYLEVTPQVIYRNGRARPTGAKGLVGKKIMVLKGSSHADQLAELKKQYPALQYEESDAVEVVDLLRMVDEGQIDLTLVDSNELAMNQVYFPNVRVAFDLGDTRDQRWAVAAGEDNSLLNEINEFLDKAQKNGTLQRLKDRYYGHVDVLGYVGAYTFAQHLQQRLPKYEKHFKSYAKVEQVDWRLLAAIGYQESMWQPEVTSKTGVRGLMMLTQRTAQAMGVSNRLDPRQSIQGGAKYFMKIKEELDDSIQEPDRTWFALAAYNVGSGHLEDARTLAKREKLNPNKWLDVKKMLPRLAQKQWYRQTKYGYARGGEPVHFVANIRRYYDILTWVTQPQLEGQVAEGNLHVPGVNKDKPADKSSPM.

A signal peptide spans 1 to 29; sequence MFAHTALRQRCAKWLLATGLFLLLGACVE. Residues 30–267 are non-LT domain; sequence KPSTLERVKE…RLKDRYYGHV (238 aa). Positions 268-485 are LT domain; sequence DVLGYVGAYT…DKPADKSSPM (218 aa). E314 is a catalytic residue. A disordered region spans residues 465-485; sequence EGNLHVPGVNKDKPADKSSPM. A compositionally biased stretch (basic and acidic residues) spans 474–485; sequence NKDKPADKSSPM.

The protein in the N-terminal section; belongs to the bacterial solute-binding protein 3 family. In the C-terminal section; belongs to the transglycosylase Slt family.

The protein resides in the cell outer membrane. The catalysed reaction is Exolytic cleavage of the (1-&gt;4)-beta-glycosidic linkage between N-acetylmuramic acid (MurNAc) and N-acetylglucosamine (GlcNAc) residues in peptidoglycan, from either the reducing or the non-reducing ends of the peptidoglycan chains, with concomitant formation of a 1,6-anhydrobond in the MurNAc residue.. In terms of biological role, murein-degrading enzyme that degrades murein glycan strands and insoluble, high-molecular weight murein sacculi, with the concomitant formation of a 1,6-anhydromuramoyl product. Lytic transglycosylases (LTs) play an integral role in the metabolism of the peptidoglycan (PG) sacculus. Their lytic action creates space within the PG sacculus to allow for its expansion as well as for the insertion of various structures such as secretion systems and flagella. The polypeptide is Membrane-bound lytic murein transglycosylase F (Pseudomonas putida (strain ATCC 700007 / DSM 6899 / JCM 31910 / BCRC 17059 / LMG 24140 / F1)).